Consider the following 194-residue polypeptide: 7-methyl-GTP pyrophosphatase (194 aa).

Residue Asp-69 is the Proton acceptor of the active site.

This sequence belongs to the Maf family. YceF subfamily. The cofactor is a divalent metal cation.

It is found in the cytoplasm. It carries out the reaction N(7)-methyl-GTP + H2O = N(7)-methyl-GMP + diphosphate + H(+). Functionally, nucleoside triphosphate pyrophosphatase that hydrolyzes 7-methyl-GTP (m(7)GTP). May have a dual role in cell division arrest and in preventing the incorporation of modified nucleotides into cellular nucleic acids. The sequence is that of 7-methyl-GTP pyrophosphatase (yceF1) from Salmonella choleraesuis (strain SC-B67).